Consider the following 670-residue polypeptide: ATP synthase subunit alpha 2 (670 aa).

180-187 is an ATP binding site; it reads GDRATGKT. The interval 525–670 is disordered; sequence MPAEDAAGDI…DAEAEARHKR (146 aa). The span at 543 to 588 shows a compositional bias: basic and acidic residues; that stretch reads ARGDADRDADHGANREVSREVSPEASREVSREVSREVSHEADRDAA. The span at 589–599 shows a compositional bias: low complexity; sequence ADAARVAGRAP. Residues 621–639 show a composition bias toward basic and acidic residues; that stretch reads ADGDRASASRPPPDARGDA. Positions 650-661 are enriched in low complexity; the sequence is ADANVNADANVD.

This sequence belongs to the ATPase alpha/beta chains family. In terms of assembly, F-type ATPases have 2 components, CF(1) - the catalytic core - and CF(0) - the membrane proton channel. CF(1) has five subunits: alpha(3), beta(3), gamma(1), delta(1), epsilon(1). CF(0) has three main subunits: a(1), b(2) and c(9-12). The alpha and beta chains form an alternating ring which encloses part of the gamma chain. CF(1) is attached to CF(0) by a central stalk formed by the gamma and epsilon chains, while a peripheral stalk is formed by the delta and b chains.

It is found in the cell inner membrane. The catalysed reaction is ATP + H2O + 4 H(+)(in) = ADP + phosphate + 5 H(+)(out). Produces ATP from ADP in the presence of a proton gradient across the membrane. The alpha chain is a regulatory subunit. In Burkholderia mallei (strain NCTC 10247), this protein is ATP synthase subunit alpha 2.